The chain runs to 267 residues: Tryptophan synthase alpha chain (267 aa).

Active-site proton acceptor residues include Glu44 and Asp55.

It belongs to the TrpA family. As to quaternary structure, tetramer of two alpha and two beta chains.

It carries out the reaction (1S,2R)-1-C-(indol-3-yl)glycerol 3-phosphate + L-serine = D-glyceraldehyde 3-phosphate + L-tryptophan + H2O. Its pathway is amino-acid biosynthesis; L-tryptophan biosynthesis; L-tryptophan from chorismate: step 5/5. Its function is as follows. The alpha subunit is responsible for the aldol cleavage of indoleglycerol phosphate to indole and glyceraldehyde 3-phosphate. The polypeptide is Tryptophan synthase alpha chain (Coxiella burnetii (strain Dugway 5J108-111)).